Consider the following 526-residue polypeptide: Microphthalmia-associated transcription factor (526 aa).

The tract at residues 1–54 is disordered; it reads MQSESGIVPDFEVGEEFHEEPKTYYELKSQPLKSSSSAEHPGASKPPISSSSMT. Ser-5 is modified (phosphoserine; by MTOR). Basic and acidic residues predominate over residues 15-25; the sequence is EEFHEEPKTYY. Over residues 41 to 54 the composition is skewed to low complexity; the sequence is PGASKPPISSSSMT. Ser-180 is subject to Phosphoserine; by MAPK. A transactivation region spans residues 224–295; sequence DDVIDDIISL…PNIKRELTAC (72 aa). Ser-280 is modified (phosphoserine; by MARK3). Lys-289 participates in a covalent cross-link: Glycyl lysine isopeptide (Lys-Gly) (interchain with G-Cter in SUMO). A bHLH domain is found at 311–364; sequence QKKDNHNLIERRRRFNINDRIKELGTLIPKSNDPDMRWNKGTILKASVDYIRKL. A coiled-coil region spans residues 355 to 402; it reads KASVDYIRKLQREQQRAKELENRQKKLEHANRHLLLRIQELEMQARAH. The segment at 374–395 is leucine-zipper; it reads LENRQKKLEHANRHLLLRIQEL. Residues 401 to 431 are DNA-binding regulation; it reads AHGLSLIPSTGLCSPDLVNRIIKQEPVLENC. Ser-405 carries the post-translational modification Phosphoserine; by GSK3. Residue Ser-414 is modified to Phosphoserine. A Glycyl lysine isopeptide (Lys-Gly) (interchain with G-Cter in SUMO) cross-link involves residue Lys-423. Ser-491 is modified (phosphoserine). Residues 496 to 526 are disordered; it reads TDPLLSSVSPGASKTSSRRSSMSMEETEHTC. The segment covering 499-509 has biased composition (polar residues); that stretch reads LLSSVSPGASK. Ser-516 is subject to Phosphoserine; by RPS6KA1.

This sequence belongs to the MiT/TFE family. In terms of assembly, homodimer or heterodimer; dimerization is mediated via the coiled coil region. Efficient DNA binding requires dimerization with another bHLH protein. Binds DNA in the form of homodimer or heterodimer with either TFE3, TFEB or TFEC. Interacts with small GTPases Rag (RagA/RRAGA, RagB/RRAGB, RagC/RRAGC and/or RagD/RRAGD); promoting its recruitment to lysosomal membrane in the presence of nutrients. Interacts with KARS1. Identified in a complex with HINT1 and CTNNB1. Interacts with VSX2. Post-translationally, when nutrients are present, phosphorylation by MTOR at Ser-5 via non-canonical mTORC1 pathway promotes ubiquitination by the SCF(BTRC) complex, followed by degradation. Phosphorylation at Ser-405 significantly enhances the ability to bind the tyrosinase promoter. Phosphorylation by MARK3/cTAK1 at Ser-280 promotes association with 14-3-3/YWHA adapters and retention in the cytosol. Phosphorylated at Ser-180 and Ser-516 following KIT signaling, triggering a short live activation: Phosphorylation at Ser-180 and Ser-516 by MAPK and RPS6KA1, respectively, activate the transcription factor activity but also promote ubiquitination and subsequent degradation by the proteasome. Phosphorylated in response to blue light (415nm). In terms of processing, ubiquitinated by the SCF(BTRC) and SCF(FBXW11) complexes following phosphorylation ar Ser-5 by MTOR, leading to its degradation by the proteasome. Ubiquitinated following phosphorylation at Ser-180, leading to subsequent degradation by the proteasome. Deubiquitinated by USP13, preventing its degradation. As to expression, expressed in melanocytes (at protein level). Expressed in the retinal pigment epithelium, brain, and placenta. Expressed in the kidney. In terms of tissue distribution, expressed in the kidney and retinal pigment epithelium. As to expression, expressed in the kidney. Expressed in melanocytes.

Its subcellular location is the nucleus. The protein resides in the cytoplasm. It localises to the lysosome membrane. In terms of biological role, transcription factor that acts as a master regulator of melanocyte survival and differentiation as well as melanosome biogenesis. Binds to M-boxes (5'-TCATGTG-3') and symmetrical DNA sequences (E-boxes) (5'-CACGTG-3') found in the promoter of pigmentation genes, such as tyrosinase (TYR). Involved in the cellular response to amino acid availability by acting downstream of MTOR: in the presence of nutrients, MITF phosphorylation by MTOR promotes its inactivation. Upon starvation or lysosomal stress, inhibition of MTOR induces MITF dephosphorylation, resulting in transcription factor activity. Plays an important role in melanocyte development by regulating the expression of tyrosinase (TYR) and tyrosinase-related protein 1 (TYRP1). Plays a critical role in the differentiation of various cell types, such as neural crest-derived melanocytes, mast cells, osteoclasts and optic cup-derived retinal pigment epithelium. The polypeptide is Microphthalmia-associated transcription factor (Homo sapiens (Human)).